We begin with the raw amino-acid sequence, 1159 residues long: DNA-directed RNA polymerase subunit beta' (1159 aa).

Mg(2+) is bound by residues aspartate 398, aspartate 400, and aspartate 402. Zn(2+) is bound by residues cysteine 741, cysteine 815, cysteine 822, and cysteine 825.

Belongs to the RNA polymerase beta' chain family. As to quaternary structure, the RNAP catalytic core consists of 2 alpha, 1 beta, 1 beta' and 1 omega subunit. When a sigma factor is associated with the core the holoenzyme is formed, which can initiate transcription. The cofactor is Mg(2+). Zn(2+) serves as cofactor.

The enzyme catalyses RNA(n) + a ribonucleoside 5'-triphosphate = RNA(n+1) + diphosphate. Its function is as follows. DNA-dependent RNA polymerase catalyzes the transcription of DNA into RNA using the four ribonucleoside triphosphates as substrates. In Porphyromonas cangingivalis, this protein is DNA-directed RNA polymerase subunit beta'.